A 274-amino-acid polypeptide reads, in one-letter code: Urease accessory protein UreD (274 aa).

This sequence belongs to the UreD family. UreD, UreF and UreG form a complex that acts as a GTP-hydrolysis-dependent molecular chaperone, activating the urease apoprotein by helping to assemble the nickel containing metallocenter of UreC. The UreE protein probably delivers the nickel.

It is found in the cytoplasm. Required for maturation of urease via the functional incorporation of the urease nickel metallocenter. The sequence is that of Urease accessory protein UreD from Klebsiella pneumoniae subsp. pneumoniae (strain ATCC 700721 / MGH 78578).